The following is a 148-amino-acid chain: Large ribosomal subunit protein uL15 (148 aa).

Over residues 1–30 the composition is skewed to basic residues; sequence MPSRLRKTRKLRGHVSHGHGRIGKHRKHPG. The disordered stretch occupies residues 1 to 38; sequence MPSRLRKTRKLRGHVSHGHGRIGKHRKHPGGRGNAGGL. His-39 is subject to (3S)-3-hydroxyhistidine. Lys-47 and Lys-55 each carry N6-acetyllysine. At Ser-68 the chain carries Phosphoserine. The residue at position 110 (Lys-110) is an N6-acetyllysine.

This sequence belongs to the universal ribosomal protein uL15 family. Component of the large ribosomal subunit. Hydroxylated on His-39 by MINA.

The protein resides in the cytoplasm. In terms of biological role, component of the large ribosomal subunit. The ribosome is a large ribonucleoprotein complex responsible for the synthesis of proteins in the cell. This Homo sapiens (Human) protein is Large ribosomal subunit protein uL15 (RPL27A).